The sequence spans 157 residues: Phosphopantetheine adenylyltransferase (157 aa).

Thr-8 is a binding site for substrate. Residues 8–9 and His-16 contribute to the ATP site; that span reads TF. The substrate site is built by Lys-40, Thr-72, and Arg-86. Residues 87–89, Glu-97, and 122–128 each bind ATP; these read GLR and YSFLSSS.

This sequence belongs to the bacterial CoaD family. As to quaternary structure, homohexamer. Mg(2+) is required as a cofactor.

It localises to the cytoplasm. It catalyses the reaction (R)-4'-phosphopantetheine + ATP + H(+) = 3'-dephospho-CoA + diphosphate. The protein operates within cofactor biosynthesis; coenzyme A biosynthesis; CoA from (R)-pantothenate: step 4/5. Reversibly transfers an adenylyl group from ATP to 4'-phosphopantetheine, yielding dephospho-CoA (dPCoA) and pyrophosphate. The protein is Phosphopantetheine adenylyltransferase of Prochlorococcus marinus (strain MIT 9301).